Reading from the N-terminus, the 243-residue chain is GrpE protein homolog, mitochondrial (243 aa).

A disordered region spans residues 56–79 (KKEEPKDENDAAAAEEDANLTEEQ).

The protein belongs to the GrpE family. In terms of assembly, component of the PAM complex, at least composed of mtHsp70, MGE1, TIM44, PAM16, PAM17 and PAM18.

It localises to the mitochondrion matrix. Its function is as follows. Essential component of the PAM complex, a complex required for the translocation of transit peptide-containing proteins from the inner membrane into the mitochondrial matrix in an ATP-dependent manner. Seems to control the nucleotide-dependent binding of SSC1 to substrate proteins. This Kluyveromyces lactis (strain ATCC 8585 / CBS 2359 / DSM 70799 / NBRC 1267 / NRRL Y-1140 / WM37) (Yeast) protein is GrpE protein homolog, mitochondrial (mge1).